Reading from the N-terminus, the 134-residue chain is uncharacterized protein (134 aa).

The next 3 membrane-spanning stretches (helical) occupy residues 5 to 25 (FGIF…FGGF), 30 to 50 (LILL…ETII), and 62 to 82 (LVKK…DQLL).

Belongs to the bacteriophage holin family. Cp-1 holin subfamily.

It is found in the cell membrane. This is an uncharacterized protein from Bacillus subtilis (strain 168).